The chain runs to 348 residues: Holliday junction branch migration complex subunit RuvB (348 aa).

A compositionally biased stretch (low complexity) spans 1–10 (MAIVSSSSGR). The interval 1 to 37 (MAIVSSSSGRKPPRRPEALMDPQQAPEEVVSRPEDKL) is disordered. The interval 13-198 (PRRPEALMDP…FGLIQRLEFY (186 aa)) is large ATPase domain (RuvB-L). ATP-binding residues include Leu37, Arg38, Gly79, Lys82, Thr83, Thr84, Arg188, Tyr198, and Arg235. Thr83 contributes to the Mg(2+) binding site. Residues 199-271 (GQGDLEAIVE…LVGEALSLHR (73 aa)) are small ATPAse domain (RuvB-S). A head domain (RuvB-H) region spans residues 274–348 (HRGLDASDRR…AARSHLAEAA (75 aa)). 2 residues coordinate DNA: Arg329 and Arg334.

Belongs to the RuvB family. In terms of assembly, homohexamer. Forms an RuvA(8)-RuvB(12)-Holliday junction (HJ) complex. HJ DNA is sandwiched between 2 RuvA tetramers; dsDNA enters through RuvA and exits via RuvB. An RuvB hexamer assembles on each DNA strand where it exits the tetramer. Each RuvB hexamer is contacted by two RuvA subunits (via domain III) on 2 adjacent RuvB subunits; this complex drives branch migration. In the full resolvosome a probable DNA-RuvA(4)-RuvB(12)-RuvC(2) complex forms which resolves the HJ.

Its subcellular location is the cytoplasm. It catalyses the reaction ATP + H2O = ADP + phosphate + H(+). The RuvA-RuvB-RuvC complex processes Holliday junction (HJ) DNA during genetic recombination and DNA repair, while the RuvA-RuvB complex plays an important role in the rescue of blocked DNA replication forks via replication fork reversal (RFR). RuvA specifically binds to HJ cruciform DNA, conferring on it an open structure. The RuvB hexamer acts as an ATP-dependent pump, pulling dsDNA into and through the RuvAB complex. RuvB forms 2 homohexamers on either side of HJ DNA bound by 1 or 2 RuvA tetramers; 4 subunits per hexamer contact DNA at a time. Coordinated motions by a converter formed by DNA-disengaged RuvB subunits stimulates ATP hydrolysis and nucleotide exchange. Immobilization of the converter enables RuvB to convert the ATP-contained energy into a lever motion, pulling 2 nucleotides of DNA out of the RuvA tetramer per ATP hydrolyzed, thus driving DNA branch migration. The RuvB motors rotate together with the DNA substrate, which together with the progressing nucleotide cycle form the mechanistic basis for DNA recombination by continuous HJ branch migration. Branch migration allows RuvC to scan DNA until it finds its consensus sequence, where it cleaves and resolves cruciform DNA. The protein is Holliday junction branch migration complex subunit RuvB of Synechococcus sp. (strain CC9605).